A 1873-amino-acid polypeptide reads, in one-letter code: MQSLDSSCQEADFIINDTLKKLKGSSNADHVQGLAVHAHGSGVHQTQFVQYGTSGSSPQLQPQQSYHQLHPTLQQQQFASSSSKSYLETSLLQAIPQIPAQPPICIFDDDESPTEGTGGSLGSLLTEPTSATPSGLPTAIAPSPSSCSSSTTTMSNFNSITSPSPVVPDLLLSTPPGVNSSLSNSSTGAASVSSKKSEKRPPSANSTASGGGHHLHHHHLHQTHNHHVLASPTSSPSKRQKSNSSSKESSSSSRSSAIPAASVSTATSSSQSARAGAGAASSNSNSKPPSSVCQSGNSKFFNLHEKIRDLYLQLLSNDLNYFAETGLKQRTRSFTLERLVDREKLNTIVVNLYPGNKGYSLALHYDEHMVLNPQTNEWSPTDKDETSSDAAGLGTGTGSHRSRPKPLAQDESQSKTEAGHAKHDFGLVEVLRWPYENDLLLQCIDREMLPEFLMDLLVAETVSLSDGEGTRVYAKPSVFYAGCVIAQIRDFRQTFATSTNICDMKHILLRPTNATLFAEVQQMGSQLPAEDKLALESQLVLATAEPLCLEPDPSIGRQAINSQHQRQLYNSHELRRQMKKFTQTAINRKRKLDQFTHHHGLELCDYLARLRQRPRTGSSSGGANATPATAPTNNPLVGAMLSSFTSKVPRRPHEVIRPIRPPTLEYPANLKVPEHVISVEKYAKAYEPLNEFSEACKDGCQPNCRHNFQPQLVEEYILETEREASEGRRALYHIKLSIFQRPSDAEYLGELYVDRDYREGERNGESCRFALGTRVHANRYIQQFREIFTEEGRKAVKITHLIPGHMPIVTHTGLTNEQRILLQQQQQQQQRQAQMQQQQQQQQQQVVVVANQQQQSQQQQQTQQAGQQLSATVHHVALPRQQITQKTLNLAGSNVINVQQNFRQQSAQQQQPQTYTIEAPQQQAAAQIVPQQQQQQQQQQQQHIHLQQLATGSSNTSTTTHQVSLSNGSLVLVQQQQPQQQSQQLAQALQHSGITIQPATIQQQQQQVKGTSVVGANSALRAQLNSNVPILQTQLKVQQQQIMQKQQQQQTTATSNNNNNNNNNNNMNNNTAIHPNPAINAIVNSIMNSANQYQQQQQQQHQQQHQQQTGNTSSNNNAAGSGGSTNNNGSSTSATTLKNSSNASILNLLNSAPAAMTSTPVASGTFTTSTGQQQPQTLTLVQHQQQSTPNTADAATATYVQTTRGTPTLVSTQRKQQSSEVLQNLLNANRKIGGGGTTTTTFRTNSAGNLIAVNLNQAGQSHHQQTGDGSQTVRVSMSALASQLASPPAVMTNPTTSYTVISSGNSAAAAAAWIQSPTGPVQQRILSSLRRDSTTAPPNAIVVGMAAPSPGSDSNASNASGFAVPNNLASTSSGGGGGGGALSALLTNAATPSPSGSDHSQSSQTHQNQALLERLSNVTSNVSAVSMPHMSPQQPQPTQQFITKTIVHSPATSSIHSPMSSPHPQPSASPQQQQQQQQQQTTATLNLQGINLSQLQGAMANFAGLQNVQVQIPGFTQPISLQFSGNSLQQQQSGNTATGAGTAQGQQRSVLVSVPVSSQQQQLPHTITLQTQSAPHHQQQHQQTQQQHAPPTGTIVSLPSSGPGTQTVVITNNSGGGVTAGSSTSGSAGGGGGSGATTAMLTLPIAQIVGAGVQKLNPQTIRTSNVGGGIGIAQQTVQQQTIQSQSGGNSTAAIQLLGTIQPRARNVQVVGTKQLANRQLITTQRQIGGSTLKIATTPVNAANVVTSSANLTTTPIVMSAQKLQLKTVKAPVQQQQQPQQQQQQLQQQHRILNQQSTATVSSQTLPSPNQVQVAQQQQQQQQQLQHIQIAGRATTASGAISQRTLTALAAAKQQQQQQQAAVNRRRSTTDATK.

The protein belongs to the SPT20 family. Component of the Spt-Ada-Gcn5 acetyltransferase (SAGA) complex consisting of wda/Taf5L, Saf6, Taf9, Taf10b, Taf12, Ada1, Spt3, Spt7, Spt20, Sf3b3, Sf3b5, Nipped-A/Tra1, a histone acetyltransferase (HAT) module made up of Gcn5, Ada2b (Isoform B), Ada3 and Sgf29, and a deubiquitinase (DUB) module made up of not/nonstop, Sgf11 and e(y)2 tethered to SAGA by Atxn7.

It localises to the nucleus. Its function is as follows. Component of the transcription regulatory complex SAGA, a multiprotein complex that activates transcription by remodeling chromatin and mediating histone acetylation and deubiquitination. The SAGA complex predominantly acetylates histone H3. The chain is SAGA complex subunit Spt20 from Drosophila melanogaster (Fruit fly).